The chain runs to 182 residues: Ribosome maturation factor RimM (182 aa).

A PRC barrel domain is found at Glu-103–Phe-182.

The protein belongs to the RimM family. In terms of assembly, binds ribosomal protein uS19.

The protein localises to the cytoplasm. An accessory protein needed during the final step in the assembly of 30S ribosomal subunit, possibly for assembly of the head region. Essential for efficient processing of 16S rRNA. May be needed both before and after RbfA during the maturation of 16S rRNA. It has affinity for free ribosomal 30S subunits but not for 70S ribosomes. The protein is Ribosome maturation factor RimM of Escherichia coli O139:H28 (strain E24377A / ETEC).